Here is a 271-residue protein sequence, read N- to C-terminus: Putative phosphoenolpyruvate synthase regulatory protein (271 aa).

G152–T159 is an ADP binding site.

This sequence belongs to the pyruvate, phosphate/water dikinase regulatory protein family. PSRP subfamily.

The enzyme catalyses [pyruvate, water dikinase] + ADP = [pyruvate, water dikinase]-phosphate + AMP + H(+). The catalysed reaction is [pyruvate, water dikinase]-phosphate + phosphate + H(+) = [pyruvate, water dikinase] + diphosphate. Its function is as follows. Bifunctional serine/threonine kinase and phosphorylase involved in the regulation of the phosphoenolpyruvate synthase (PEPS) by catalyzing its phosphorylation/dephosphorylation. This chain is Putative phosphoenolpyruvate synthase regulatory protein, found in Legionella pneumophila (strain Paris).